Here is a 150-residue protein sequence, read N- to C-terminus: Flagellar assembly factor FliW (150 aa).

This sequence belongs to the FliW family. As to quaternary structure, interacts with translational regulator CsrA and flagellin(s).

Its subcellular location is the cytoplasm. Acts as an anti-CsrA protein, binds CsrA and prevents it from repressing translation of its target genes, one of which is flagellin. Binds to flagellin and participates in the assembly of the flagellum. In Leptospira interrogans serogroup Icterohaemorrhagiae serovar copenhageni (strain Fiocruz L1-130), this protein is Flagellar assembly factor FliW.